The following is a 467-amino-acid chain: RuvB-like helicase 2 (467 aa).

73–80 (GPPSTGKT) is an ATP binding site.

The protein belongs to the RuvB family. In terms of assembly, may form heterododecamers with RVB1. Component of the SWR1 chromatin remodeling complex, the INO80 chromatin remodeling complex, and of the R2TP complex.

The protein resides in the nucleus. It catalyses the reaction ATP + H2O = ADP + phosphate + H(+). Functionally, DNA helicase which participates in several chromatin remodeling complexes, including the SWR1 and the INO80 complexes. The SWR1 complex mediates the ATP-dependent exchange of histone H2A for the H2A variant HZT1 leading to transcriptional regulation of selected genes by chromatin remodeling. The INO80 complex remodels chromatin by shifting nucleosomes and is involved in DNA repair. Also involved in pre-rRNA processing. The protein is RuvB-like helicase 2 (RVB2) of Kluyveromyces lactis (strain ATCC 8585 / CBS 2359 / DSM 70799 / NBRC 1267 / NRRL Y-1140 / WM37) (Yeast).